A 1467-amino-acid chain; its full sequence is Chromatin modification-related protein eaf1 (1467 aa).

Disordered stretches follow at residues 154–314 (PALA…QLEA), 329–402 (GDVT…SQVG), and 469–522 (PADM…EKDD). 4 stretches are compositionally biased toward polar residues: residues 155-174 (ALATTSEIPQVANSPTTPAQ), 244-263 (SEDQPLSPASSAGPYSNNTP), 330-339 (DVTTASSLSN), and 388-401 (PPAQSIQEETQSQV). Over residues 475–484 (APASASPESA) the composition is skewed to low complexity. In terms of domain architecture, HSA spans 607–686 (LKRSVEPPRQ…EKKEAHASSM (80 aa)). The region spanning 877-935 (QSSQWTYAEDDELRRLVKEYSYNWSLISSCLTPSSQFTSGAERRTPWECFERWVGLEGL) is the Myb-like domain. Low complexity predominate over residues 970–979 (QQQQQQQQQQ). Disordered regions lie at residues 970–1058 (QQQQ…PAEF), 1113–1202 (GIPH…TSPD), 1216–1307 (QQRI…MGQP), and 1377–1467 (DGNF…IPSG). Over residues 1162–1174 (GGPPMNGPIPPNP) the composition is skewed to pro residues. 3 stretches are compositionally biased toward low complexity: residues 1175–1186 (MAMKMMPQTGMP), 1216–1226 (QQRILQSRQQQ), and 1233–1253 (QQPQAQQAQQQFHNQQQFGPQ). Composition is skewed to polar residues over residues 1254-1271 (GSHSPNMNLPNVNGTPNN) and 1428-1445 (LPQQSRSATPQTQRSGSA). Over residues 1457–1467 (PHPPQAQIPSG) the composition is skewed to pro residues.

It belongs to the EAF1 family. In terms of assembly, component of the NuA4 histone acetyltransferase complex.

The protein localises to the nucleus. Functionally, component of the NuA4 histone acetyltransferase complex which is involved in transcriptional activation of selected genes principally by acetylation of nucleosomal histone H4 and H2A. The NuA4 complex is also involved in DNA repair. The polypeptide is Chromatin modification-related protein eaf1 (eaf1) (Aspergillus fumigatus (strain ATCC MYA-4609 / CBS 101355 / FGSC A1100 / Af293) (Neosartorya fumigata)).